The sequence spans 273 residues: Release factor glutamine methyltransferase (273 aa).

S-adenosyl-L-methionine-binding positions include 109 to 113 (GTGSG), Asp132, Trp159, and Asn176. 176-179 (NPPY) contacts substrate.

It belongs to the protein N5-glutamine methyltransferase family. PrmC subfamily.

The enzyme catalyses L-glutaminyl-[peptide chain release factor] + S-adenosyl-L-methionine = N(5)-methyl-L-glutaminyl-[peptide chain release factor] + S-adenosyl-L-homocysteine + H(+). In terms of biological role, methylates the class 1 translation termination release factors RF1/PrfA and RF2/PrfB on the glutamine residue of the universally conserved GGQ motif. This is Release factor glutamine methyltransferase from Neisseria gonorrhoeae (strain ATCC 700825 / FA 1090).